The following is a 1496-amino-acid chain: DNA-directed RNA polymerase subunit beta' (1496 aa).

Residues Cys67, Cys69, Cys82, and Cys85 each contribute to the Zn(2+) site. Residues Asp499, Asp501, and Asp503 each contribute to the Mg(2+) site. 4 residues coordinate Zn(2+): Cys867, Cys943, Cys950, and Cys953.

Belongs to the RNA polymerase beta' chain family. As to quaternary structure, the RNAP catalytic core consists of 2 alpha, 1 beta, 1 beta' and 1 omega subunit. When a sigma factor is associated with the core the holoenzyme is formed, which can initiate transcription. Requires Mg(2+) as cofactor. The cofactor is Zn(2+).

It carries out the reaction RNA(n) + a ribonucleoside 5'-triphosphate = RNA(n+1) + diphosphate. Its function is as follows. DNA-dependent RNA polymerase catalyzes the transcription of DNA into RNA using the four ribonucleoside triphosphates as substrates. This Chlorobium limicola (strain DSM 245 / NBRC 103803 / 6330) protein is DNA-directed RNA polymerase subunit beta'.